The primary structure comprises 295 residues: GTP cyclohydrolase FolE2 (295 aa).

The protein belongs to the GTP cyclohydrolase IV family.

It carries out the reaction GTP + H2O = 7,8-dihydroneopterin 3'-triphosphate + formate + H(+). Its pathway is cofactor biosynthesis; 7,8-dihydroneopterin triphosphate biosynthesis; 7,8-dihydroneopterin triphosphate from GTP: step 1/1. In terms of biological role, converts GTP to 7,8-dihydroneopterin triphosphate. This chain is GTP cyclohydrolase FolE2, found in Pseudomonas putida (strain W619).